The following is a 338-amino-acid chain: Heat-inducible transcription repressor HrcA (338 aa).

This sequence belongs to the HrcA family.

Its function is as follows. Negative regulator of class I heat shock genes (grpE-dnaK-dnaJ and groELS operons). Prevents heat-shock induction of these operons. The chain is Heat-inducible transcription repressor HrcA from Bacillus cereus (strain 03BB102).